A 407-amino-acid polypeptide reads, in one-letter code: tRNA pseudouridine synthase 4 (407 aa).

The interval 83–105 (FRPAPPHPNDRNRRRRKSNRLPD) is disordered. Aspartate 115 acts as the Nucleophile in catalysis. Positions 274-298 (TEQDINPQDGDEKINAKSPTTNSVT) are disordered. Position 291 is a phosphoserine (serine 291). The residue at position 293 (threonine 293) is a Phosphothreonine. Position 296 is a phosphoserine (serine 296). At threonine 406 the chain carries Phosphothreonine.

It belongs to the pseudouridine synthase TruB family.

The protein localises to the nucleus. The protein resides in the mitochondrion. The catalysed reaction is uridine(55) in tRNA = pseudouridine(55) in tRNA. The enzyme catalyses a uridine in mRNA = a pseudouridine in mRNA. In terms of biological role, responsible for synthesis of pseudouridine from uracil-55 in the psi GC loop of transfer RNAs. Also catalyzes pseudouridylation of mRNAs with the consensus sequence 5'-GGUUCRA-3'. The chain is tRNA pseudouridine synthase 4 from Schizosaccharomyces pombe (strain 972 / ATCC 24843) (Fission yeast).